Here is a 564-residue protein sequence, read N- to C-terminus: O-fucosyltransferase 5 (564 aa).

The tract at residues 1–28 is disordered; it reads MVRNSSDEEEDHRNLIPQNDTRDNDLNL. The helical; Signal-anchor for type II membrane protein transmembrane segment at 70-90 threads the bilayer; it reads YVVAAVSLTLFVGLLFLFTDT. 3 N-linked (GlcNAc...) asparagine glycosylation sites follow: Asn129, Asn134, and Asn174. Residues 413-415 and 529-530 each bind substrate; these read HLR and TF.

The protein belongs to the glycosyltransferase GT106 family.

It localises to the membrane. The protein operates within glycan metabolism. This is O-fucosyltransferase 5 from Arabidopsis thaliana (Mouse-ear cress).